Consider the following 175-residue polypeptide: Peptide methionine sulfoxide reductase MsrA (175 aa).

Cysteine 12 is an active-site residue.

It belongs to the MsrA Met sulfoxide reductase family.

It catalyses the reaction L-methionyl-[protein] + [thioredoxin]-disulfide + H2O = L-methionyl-(S)-S-oxide-[protein] + [thioredoxin]-dithiol. The enzyme catalyses [thioredoxin]-disulfide + L-methionine + H2O = L-methionine (S)-S-oxide + [thioredoxin]-dithiol. Functionally, has an important function as a repair enzyme for proteins that have been inactivated by oxidation. Catalyzes the reversible oxidation-reduction of methionine sulfoxide in proteins to methionine. The chain is Peptide methionine sulfoxide reductase MsrA from Limosilactobacillus reuteri (strain DSM 20016) (Lactobacillus reuteri).